Reading from the N-terminus, the 609-residue chain is Alpha-glycerophosphate oxidase (609 aa).

Residue 21 to 49 (DLLVIGGGITGAGLTLQAAAAGMKVAVLE) participates in FAD binding.

Belongs to the FAD-dependent glycerol-3-phosphate dehydrogenase family. FAD is required as a cofactor.

The protein resides in the cytoplasm. The catalysed reaction is sn-glycerol 3-phosphate + O2 = dihydroxyacetone phosphate + H2O2. The chain is Alpha-glycerophosphate oxidase (glpO) from Lactococcus lactis subsp. lactis (strain IL1403) (Streptococcus lactis).